Here is a 203-residue protein sequence, read N- to C-terminus: uncharacterized protein (203 aa).

The protein belongs to the DadA oxidoreductase family.

Functionally, either a functional dehydrogenase or a non-functional fragment. This is an uncharacterized protein from Sinorhizobium fredii (strain NBRC 101917 / NGR234).